Here is an 80-residue protein sequence, read N- to C-terminus: Exodeoxyribonuclease 7 small subunit (80 aa).

It belongs to the XseB family. Heterooligomer composed of large and small subunits.

It localises to the cytoplasm. The catalysed reaction is Exonucleolytic cleavage in either 5'- to 3'- or 3'- to 5'-direction to yield nucleoside 5'-phosphates.. Bidirectionally degrades single-stranded DNA into large acid-insoluble oligonucleotides, which are then degraded further into small acid-soluble oligonucleotides. The sequence is that of Exodeoxyribonuclease 7 small subunit from Pseudomonas paraeruginosa (strain DSM 24068 / PA7) (Pseudomonas aeruginosa (strain PA7)).